Here is a 134-residue protein sequence, read N- to C-terminus: Perlwapin (134 aa).

WAP domains lie at 2–45, 46–89, and 90–132; these read GPNL…CVPK, PKPG…YRPE, and KPGS…EKPC. Cystine bridges form between Cys8–Cys34, Cys17–Cys38, Cys21–Cys33, Cys27–Cys42, Cys51–Cys77, Cys59–Cys82, Cys64–Cys76, Cys70–Cys85, Cys94–Cys121, Cys104–Cys124, Cys108–Cys120, and Cys114–Cys128.

As to expression, nacreous layer of shell.

Inhibits growth of calcium carbonate crystals. May inhibit growth of certain crystallographic planes in the mineral phase of nacre in the shell. The sequence is that of Perlwapin from Haliotis laevigata (Smooth Australian abalone).